The chain runs to 122 residues: Small ribosomal subunit protein bS6 (122 aa).

The protein belongs to the bacterial ribosomal protein bS6 family.

Binds together with bS18 to 16S ribosomal RNA. The protein is Small ribosomal subunit protein bS6 of Neisseria gonorrhoeae (strain ATCC 700825 / FA 1090).